Reading from the N-terminus, the 342-residue chain is Methionyl-tRNA formyltransferase (342 aa).

108 to 111 (SLLP) lines the (6S)-5,6,7,8-tetrahydrofolate pocket.

It belongs to the Fmt family.

It carries out the reaction L-methionyl-tRNA(fMet) + (6R)-10-formyltetrahydrofolate = N-formyl-L-methionyl-tRNA(fMet) + (6S)-5,6,7,8-tetrahydrofolate + H(+). Attaches a formyl group to the free amino group of methionyl-tRNA(fMet). The formyl group appears to play a dual role in the initiator identity of N-formylmethionyl-tRNA by promoting its recognition by IF2 and preventing the misappropriation of this tRNA by the elongation apparatus. This is Methionyl-tRNA formyltransferase from Prochlorococcus marinus (strain MIT 9303).